The following is a 297-amino-acid chain: Homoserine kinase (297 aa).

85–95 is a binding site for ATP; the sequence is PPTRGMGSSSA.

The protein belongs to the GHMP kinase family. Homoserine kinase subfamily.

Its subcellular location is the cytoplasm. The catalysed reaction is L-homoserine + ATP = O-phospho-L-homoserine + ADP + H(+). The protein operates within amino-acid biosynthesis; L-threonine biosynthesis; L-threonine from L-aspartate: step 4/5. Its function is as follows. Catalyzes the ATP-dependent phosphorylation of L-homoserine to L-homoserine phosphate. In Desulfitobacterium hafniense (strain DSM 10664 / DCB-2), this protein is Homoserine kinase.